Reading from the N-terminus, the 20-residue chain is Thylakoid lumenal 18.4 kDa protein (20 aa).

The protein localises to the plastid. It is found in the chloroplast thylakoid lumen. This is Thylakoid lumenal 18.4 kDa protein from Spinacia oleracea (Spinach).